The sequence spans 107 residues: EPIDERMAL PATTERNING FACTOR-like protein 5 (107 aa).

An N-terminal signal peptide occupies residues 1-22; it reads MGVVLPTLIVYAFLLFFSSSSA. Intrachain disulfides connect Cys64-Cys98, Cys68-Cys74, and Cys71-Cys100.

Belongs to the plant cysteine rich small secretory peptide family. Epidermal patterning factor subfamily. As to quaternary structure, interacts with ERECTA. As to expression, expressed asymetically in the hypocotyl, on the side proximal to the folded cotyledons at germination. Detected in developing flowers, the chalazal region of ovules and near the root apex, but not in inflorescence stems. Expressed in cotyledons, flowers, adult leaves and fruits.

It is found in the secreted. Controls stomatal patterning. Mediates differentiation of stomatal lineage cells to pavement cells and stomatal development inhibition. TMM (AC Q9SSD1) functions to dampen or block CLL1 signaling. Acts as a growth-regulatory ligand for ERECTA family receptors. Promotes fruit growth and fertility. The protein is EPIDERMAL PATTERNING FACTOR-like protein 5 of Arabidopsis thaliana (Mouse-ear cress).